Here is a 134-residue protein sequence, read N- to C-terminus: Small ribosomal subunit protein uS8 (134 aa).

The protein belongs to the universal ribosomal protein uS8 family. In terms of assembly, part of the 30S ribosomal subunit. Contacts proteins S5 and S12.

Functionally, one of the primary rRNA binding proteins, it binds directly to 16S rRNA central domain where it helps coordinate assembly of the platform of the 30S subunit. In Fervidobacterium nodosum (strain ATCC 35602 / DSM 5306 / Rt17-B1), this protein is Small ribosomal subunit protein uS8.